We begin with the raw amino-acid sequence, 118 residues long: NADH-quinone oxidoreductase subunit A 2 (118 aa).

The next 3 membrane-spanning stretches (helical) occupy residues 5–25, 62–82, and 87–107; these read YLPI…SLIF, IIAM…PWAV, and LGMF…VGYI.

Belongs to the complex I subunit 3 family. NDH-1 is composed of 14 different subunits. Subunits NuoA, H, J, K, L, M, N constitute the membrane sector of the complex.

The protein localises to the cell inner membrane. The catalysed reaction is a quinone + NADH + 5 H(+)(in) = a quinol + NAD(+) + 4 H(+)(out). In terms of biological role, NDH-1 shuttles electrons from NADH, via FMN and iron-sulfur (Fe-S) centers, to quinones in the respiratory chain. The immediate electron acceptor for the enzyme in this species is believed to be ubiquinone. Couples the redox reaction to proton translocation (for every two electrons transferred, four hydrogen ions are translocated across the cytoplasmic membrane), and thus conserves the redox energy in a proton gradient. This Geotalea uraniireducens (strain Rf4) (Geobacter uraniireducens) protein is NADH-quinone oxidoreductase subunit A 2.